Here is an 852-residue protein sequence, read N- to C-terminus: Zinc finger protein 484 (852 aa).

The KRAB domain maps to 8–78 (VSFKDVTVDF…DGEIPSQSRP (71 aa)). Residue Lys-156 forms a Glycyl lysine isopeptide (Lys-Gly) (interchain with G-Cter in SUMO2) linkage. The C2H2-type 1; degenerate zinc-finger motif lies at 223–245 (CECNQCGKPLHHKQALIQQQKIH). The C2H2-type 2; degenerate zinc finger occupies 279–301 (HECHECEAVFTQKSQLDGSQRVY). The C2H2-type 3; degenerate zinc-finger motif lies at 328-350 (YKCSDYGRAFIQKSDLFRCQRIH). The C2H2-type 4; degenerate zinc finger occupies 356 to 378 (YEYSECEKNLPQNSNLNIHKKIH). 15 C2H2-type zinc fingers span residues 384 to 406 (FECT…QKIH), 412 to 434 (YVCT…ERIH), 440 to 462 (YECS…QRIH), 468 to 490 (FICS…QKIH), 496 to 518 (YICT…QKIH), 524 to 546 (YKCS…QKCH), 552 to 574 (YECS…QRIH), 580 to 602 (YVCT…ERIH), 608 to 630 (YECS…QQIH), 636 to 658 (YRCA…QKIH), 664 to 686 (YKCS…QQSH), 692 to 714 (YECS…QRIH), 720 to 742 (YICN…RRIH), 748 to 770 (YECS…HRIH), and 776 to 798 (YICA…QKIH). Lys-816 participates in a covalent cross-link: Glycyl lysine isopeptide (Lys-Gly) (interchain with G-Cter in SUMO2).

This sequence belongs to the krueppel C2H2-type zinc-finger protein family.

It localises to the nucleus. Functionally, may be involved in transcriptional regulation. The sequence is that of Zinc finger protein 484 (ZNF484) from Homo sapiens (Human).